The primary structure comprises 405 residues: Cytoplasmic tRNA 2-thiolation protein 2 (405 aa).

This sequence belongs to the CTU2/NCS2 family.

The protein localises to the cytoplasm. Its pathway is tRNA modification; 5-methoxycarbonylmethyl-2-thiouridine-tRNA biosynthesis. In terms of biological role, plays a central role in 2-thiolation of mcm(5)S(2)U at tRNA wobble positions of tRNA(Lys), tRNA(Glu) and tRNA(Gln). May act by forming a heterodimer with NCS6/CTU1 that ligates sulfur from thiocarboxylated URM1 onto the uridine of tRNAs at wobble position. The protein is Cytoplasmic tRNA 2-thiolation protein 2 of Drosophila persimilis (Fruit fly).